Consider the following 453-residue polypeptide: UPF0210 protein Mbar_A3181 (453 aa).

The protein belongs to the UPF0210 family.

The polypeptide is UPF0210 protein Mbar_A3181 (Methanosarcina barkeri (strain Fusaro / DSM 804)).